We begin with the raw amino-acid sequence, 179 residues long: 6,7-dimethyl-8-ribityllumazine synthase (179 aa).

Residues tryptophan 13, 45–47 (AVE), and 68–70 (VVI) each bind 5-amino-6-(D-ribitylamino)uracil. 73-74 (DT) is a (2S)-2-hydroxy-3-oxobutyl phosphate binding site. Catalysis depends on histidine 76, which acts as the Proton donor. Phenylalanine 101 lines the 5-amino-6-(D-ribitylamino)uracil pocket. (2S)-2-hydroxy-3-oxobutyl phosphate is bound at residue arginine 115. Residues 157-179 (AKAAKKPAKAAAKTQKKKKKVRK) are disordered.

The protein belongs to the DMRL synthase family.

It carries out the reaction (2S)-2-hydroxy-3-oxobutyl phosphate + 5-amino-6-(D-ribitylamino)uracil = 6,7-dimethyl-8-(1-D-ribityl)lumazine + phosphate + 2 H2O + H(+). It participates in cofactor biosynthesis; riboflavin biosynthesis; riboflavin from 2-hydroxy-3-oxobutyl phosphate and 5-amino-6-(D-ribitylamino)uracil: step 1/2. Its function is as follows. Catalyzes the formation of 6,7-dimethyl-8-ribityllumazine by condensation of 5-amino-6-(D-ribitylamino)uracil with 3,4-dihydroxy-2-butanone 4-phosphate. This is the penultimate step in the biosynthesis of riboflavin. The protein is 6,7-dimethyl-8-ribityllumazine synthase of Bdellovibrio bacteriovorus (strain ATCC 15356 / DSM 50701 / NCIMB 9529 / HD100).